The following is a 196-amino-acid chain: Putative HTH-type transcriptional regulator in exeN 3'region (196 aa).

An HTH luxR-type domain is found at 120–185; it reads ASVGGDRLTR…ELFNLFLNHL (66 aa). The H-T-H motif DNA-binding region spans 144–163; that stretch reads TEAIAAALGIGNGTVKNHRK.

The polypeptide is Putative HTH-type transcriptional regulator in exeN 3'region (Aeromonas salmonicida).